A 376-amino-acid polypeptide reads, in one-letter code: MGCFFSKKSRRKSPKKDAALPTGDESATGNDLAETNNTALGSNSNQEAPKQYSWDKREKVDPKDFMLTGLKNETVGRLPGKLNGQQFVIQDCENCNIFVLDHSATITIDDCVNCRIVLGPVKGSVFFRDCKDIKCVVACQQFRTRDCKKMDVFLCCATQPIIESSTGMKFGCFQYYYPELAFHFKDAGLSIFNNNWSNIHDFTPVSGETNWSLLPEDAVVLDHVPLPDPESEFKSVRIATEAGRSIVPLTKGSRRTESEESCLFVFFAGDYTTANARKLIDEATAKGFVLIQTKEVSMRPEDVSRVFQNNAESLTEWITKGPVVALELNGDGVVEACRSFANEVFNGTQLFVSESKNTSSRDVDNFFNFADMQMGL.

A disordered region spans residues methionine 1–aspartate 55. Glycine 2 carries the N-myristoyl glycine lipid modification. Cysteine 3 is lipidated: S-palmitoyl cysteine. Residues glutamate 25–alanine 48 show a composition bias toward polar residues. Positions proline 49 to proline 204 constitute a C-CAP/cofactor C-like domain. GTP-binding positions include glycine 123–serine 124 and glutamine 140–arginine 143.

This sequence belongs to the TBCC family. Myristoylated on Gly-2; which may be required for membrane targeting. In terms of processing, palmitoylated on Cys-3; which may be required for plasma membrane targeting. In terms of tissue distribution, in the retina, detected in both rod and cone photoreceptors (at protein level). Has strongest expression in the retinal outer nuclear layer (ONL) and weaker expression in the outer plexiform layer (OPL) and inner plexiform layer (IPL) (at protein level). Expressed in all tissues tested.

It is found in the cell membrane. It localises to the cell projection. The protein resides in the cilium. Its function is as follows. Acts as a GTPase-activating protein (GAP) involved in trafficking between the Golgi and the ciliary membrane. Acts as a GTPase-activating protein (GAP) for tubulin in concert with tubulin-specific chaperone C, but does not enhance tubulin heterodimerization. In the retina, required for maintenance of rod and cone photoreceptor cells. May have a role in normal retinal localization of the transducins GNB1 and GNAT1, and the rhodopsin kinase GRK1. This is Protein XRP2 from Danio rerio (Zebrafish).